The following is a 521-amino-acid chain: MTKAVQIKNRPTGLIILDGWGHREATQHNAIAQAHTPNWDNLLKDYHHTLINTSGLAVGLPEGQMGNSEVGHMNLGAGRVVYQELTRIQKDIDDGRFFENNALVKAIDAASNRDHKVHILGLLSDGGVHSHISHIKASIKMAHDRGAKVYVHIFTDGRDTAPQSALQYIEELETFMKELGGGRIASVTGRYFALDRDNRWERVKKAYDAIACGSAEFEAKDAKEAVELAYARGENDEFIQATVIPRNNGKPARVKDGDSVIFMNFRSDRARQLTEAFIMDDFADFHRCKTPVLSAFVTLTEYKKNFEKFGALVAYRPTSLRNTFGEYVSKKGLKQLRIAETEKYAHVTFFFNGGVEEPNDNEVRILINSPQVATYDLQPEMSLPELKEKLIDAIKSGEYDTFICNIANPDMVGHTGDFNACVQAAEAVDEALGEILATIKAVDGEAIVTADHGNMEMLFNEETGKPLTSHTTFPVPFVYFGKKGYPLKDGGALCDVIPTLLDMMGIEKPEEMTGTSLIDKA.

Mn(2+) is bound by residues Asp18 and Ser68. Ser68 serves as the catalytic Phosphoserine intermediate. Substrate is bound by residues His129, Arg158–Asp159, Arg190, Arg196, Arg266–Arg269, and Lys343. Residues Asp410, His414, Asp451, His452, and His470 each coordinate Mn(2+).

The protein belongs to the BPG-independent phosphoglycerate mutase family. Monomer. Requires Mn(2+) as cofactor.

It carries out the reaction (2R)-2-phosphoglycerate = (2R)-3-phosphoglycerate. The protein operates within carbohydrate degradation; glycolysis; pyruvate from D-glyceraldehyde 3-phosphate: step 3/5. Its function is as follows. Catalyzes the interconversion of 2-phosphoglycerate and 3-phosphoglycerate. The polypeptide is 2,3-bisphosphoglycerate-independent phosphoglycerate mutase (Hydrogenovibrio crunogenus (strain DSM 25203 / XCL-2) (Thiomicrospira crunogena)).